Reading from the N-terminus, the 167-residue chain is S-ribosylhomocysteine lyase (167 aa).

Fe cation is bound by residues H54, H58, and C128.

It belongs to the LuxS family. Homodimer. Fe cation is required as a cofactor.

It carries out the reaction S-(5-deoxy-D-ribos-5-yl)-L-homocysteine = (S)-4,5-dihydroxypentane-2,3-dione + L-homocysteine. Involved in the synthesis of autoinducer 2 (AI-2) which is secreted by bacteria and is used to communicate both the cell density and the metabolic potential of the environment. The regulation of gene expression in response to changes in cell density is called quorum sensing. Catalyzes the transformation of S-ribosylhomocysteine (RHC) to homocysteine (HC) and 4,5-dihydroxy-2,3-pentadione (DPD). The chain is S-ribosylhomocysteine lyase from Sulfurimonas denitrificans (strain ATCC 33889 / DSM 1251) (Thiomicrospira denitrificans (strain ATCC 33889 / DSM 1251)).